Reading from the N-terminus, the 182-residue chain is Inner membrane assembly complex subunit 17 (182 aa).

The N-terminal 45 residues, 1-45, are a transit peptide targeting the mitochondrion; it reads MLKRRSNALITLSRTKLFPITTVAYYHRRLLNQQRRAVSTSPKKE. Residues 46 to 107 are Mitochondrial matrix-facing; sequence IKSLEDLANL…EIPVKRFIRP (62 aa). A helical membrane pass occupies residues 108–127; sequence LWMFILMGSSVYLLLHFSWW. A coiled-coil region spans residues 128–158; the sequence is KLEHEERESQLKKEVEILEHQLNELIIQDKT. Residues 128–182 are Mitochondrial intermembrane-facing; sequence KLEHEERESQLKKEVEILEHQLNELIIQDKTHNTSRGKGSNESTHMKPWYRRWFW.

This sequence belongs to the INA17 family. Component of the inner membrane assembly (INA) complex, composed of INA17 and INA22. Interacts with a subset of F(1)F(0)-ATP synthase subunits of the F(1)-domain and the peripheral stalk.

It localises to the mitochondrion inner membrane. Its function is as follows. Component of the INA complex (INAC) that promotes the biogenesis of mitochondrial F(1)F(0)-ATP synthase. INAC facilitates the assembly of the peripheral stalk and promotes the assembly of the catalytic F(1)-domain with the membrane-embedded F(0)-domain. This Saccharomyces cerevisiae (strain YJM789) (Baker's yeast) protein is Inner membrane assembly complex subunit 17.